The following is a 183-amino-acid chain: Capsid protein (183 aa).

Residues 136–183 (NAPILSTLPETTVVRRRGRSPRRRTPSPRRRRSQSPRRRRSQSRESQC) form a disordered region. The span at 149-176 (VRRRGRSPRRRTPSPRRRRSQSPRRRRS) shows a compositional bias: basic residues. Phosphoserine; by host is present on residues serine 155, serine 162, and serine 170. The 1; half-length repeat unit spans residues 155–161 (SPRRRTP). The tract at residues 155-177 (SPRRRTPSPRRRRSQSPRRRRSQ) is 3 X 8 AA repeats of S-P-R-R-R-[PR]-S-Q. The Bipartite nuclear localization signal signature appears at 158-175 (RRTPSPRRRRSQSPRRRR). A run of 2 repeats spans residues 162-169 (SPRRRRSQ) and 170-177 (SPRRRRSQ). The RNA binding stretch occupies residues 177–183 (QSRESQC).

This sequence belongs to the orthohepadnavirus core antigen family. As to quaternary structure, homodimerizes, then multimerizes. Interacts with cytosol exposed regions of viral L glycoprotein present in the reticulum-to-Golgi compartment. Interacts with human FLNB. Phosphorylated form interacts with host importin alpha; this interaction depends on the exposure of the NLS, which itself depends upon genome maturation and/or phosphorylation of the capsid protein. Interacts with host NUP153. Phosphorylated by host SRPK1, SRPK2, and maybe protein kinase C or GAPDH. Phosphorylation is critical for pregenomic RNA packaging. Protein kinase C phosphorylation is stimulated by HBx protein and may play a role in transport of the viral genome to the nucleus at the late step during the viral replication cycle.

The protein localises to the virion. It is found in the host cytoplasm. Self assembles to form an icosahedral capsid. Most capsids appear to be large particles with an icosahedral symmetry of T=4 and consist of 240 copies of capsid protein, though a fraction forms smaller T=3 particles consisting of 180 capsid proteins. Entering capsids are transported along microtubules to the nucleus. Phosphorylation of the capsid is thought to induce exposure of nuclear localization signal in the C-terminal portion of the capsid protein that allows binding to the nuclear pore complex via the importin (karyopherin-) alpha and beta. Capsids are imported in intact form through the nuclear pore into the nuclear basket, where it probably binds NUP153. Only capsids that contain the mature viral genome can release the viral DNA and capsid protein into the nucleoplasm. Immature capsids get stuck in the basket. Capsids encapsulate the pre-genomic RNA and the P protein. Pre-genomic RNA is reverse-transcribed into DNA while the capsid is still in the cytoplasm. The capsid can then either be directed to the nucleus, providing more genomes for transcription, or bud through the endoplasmic reticulum to provide new virions. The protein is Capsid protein of Hepatitis B virus genotype B2 (isolate Indonesia/pIDW420/1988) (HBV-B).